The following is a 126-amino-acid chain: Glycine cleavage system H protein (126 aa).

The Lipoyl-binding domain occupies Thr24–Lys105. The residue at position 65 (Lys65) is an N6-lipoyllysine.

It belongs to the GcvH family. As to quaternary structure, the glycine cleavage system is composed of four proteins: P, T, L and H. Requires (R)-lipoate as cofactor.

Its function is as follows. The glycine cleavage system catalyzes the degradation of glycine. The H protein shuttles the methylamine group of glycine from the P protein to the T protein. This Burkholderia vietnamiensis (strain G4 / LMG 22486) (Burkholderia cepacia (strain R1808)) protein is Glycine cleavage system H protein.